The primary structure comprises 124 residues: MATVNQLVRKPRAPKVDKTNVPALEACPQKRGVCTRVYTTAPKKPNSALRKVARVRLTNGFEVTSYIGGEGHNLQEHSVILIRGGRVKDLPGVRYHTIRGALDCAGVNARRQARSKYGAKRPKS.

Residue Asp-89 is modified to 3-methylthioaspartic acid.

Belongs to the universal ribosomal protein uS12 family. Part of the 30S ribosomal subunit. Contacts proteins S8 and S17. May interact with IF1 in the 30S initiation complex.

In terms of biological role, with S4 and S5 plays an important role in translational accuracy. Functionally, interacts with and stabilizes bases of the 16S rRNA that are involved in tRNA selection in the A site and with the mRNA backbone. Located at the interface of the 30S and 50S subunits, it traverses the body of the 30S subunit contacting proteins on the other side and probably holding the rRNA structure together. The combined cluster of proteins S8, S12 and S17 appears to hold together the shoulder and platform of the 30S subunit. The polypeptide is Small ribosomal subunit protein uS12 (Shewanella amazonensis (strain ATCC BAA-1098 / SB2B)).